A 296-amino-acid polypeptide reads, in one-letter code: Light-independent protochlorophyllide reductase iron-sulfur ATP-binding protein (296 aa).

Residues 1–20 (MTTTLSRPTDGEGSVQVQQD) are disordered. ATP contacts are provided by residues 39 to 44 (GIGKST) and lysine 68. Serine 43 lines the Mg(2+) pocket. Positions 124 and 158 each coordinate [4Fe-4S] cluster. 209 to 210 (NR) lines the ATP pocket.

Belongs to the NifH/BchL/ChlL family. As to quaternary structure, homodimer. Protochlorophyllide reductase is composed of three subunits; ChlL, ChlN and ChlB. The cofactor is [4Fe-4S] cluster.

The catalysed reaction is chlorophyllide a + oxidized 2[4Fe-4S]-[ferredoxin] + 2 ADP + 2 phosphate = protochlorophyllide a + reduced 2[4Fe-4S]-[ferredoxin] + 2 ATP + 2 H2O. It participates in porphyrin-containing compound metabolism; chlorophyll biosynthesis (light-independent). In terms of biological role, component of the dark-operative protochlorophyllide reductase (DPOR) that uses Mg-ATP and reduced ferredoxin to reduce ring D of protochlorophyllide (Pchlide) to form chlorophyllide a (Chlide). This reaction is light-independent. The L component serves as a unique electron donor to the NB-component of the complex, and binds Mg-ATP. In Synechococcus sp. (strain CC9902), this protein is Light-independent protochlorophyllide reductase iron-sulfur ATP-binding protein.